We begin with the raw amino-acid sequence, 267 residues long: Carboxy-S-adenosyl-L-methionine synthase (267 aa).

Residues 1–11 are compositionally biased toward polar residues; it reads MPNRDTQSQND. The tract at residues 1–25 is disordered; it reads MPNRDTQSQNDTPRHSPEAAEPQRD. Positions 12-24 are enriched in basic and acidic residues; sequence TPRHSPEAAEPQR. S-adenosyl-L-methionine-binding positions include Tyr59, 84 to 86, 109 to 110, 137 to 138, Asn152, and Arg219; these read GCS, DN, and DI.

The protein belongs to the class I-like SAM-binding methyltransferase superfamily. Cx-SAM synthase family. Homodimer.

The catalysed reaction is prephenate + S-adenosyl-L-methionine = carboxy-S-adenosyl-L-methionine + 3-phenylpyruvate + H2O. Its function is as follows. Catalyzes the conversion of S-adenosyl-L-methionine (SAM) to carboxy-S-adenosyl-L-methionine (Cx-SAM). This Yersinia pseudotuberculosis serotype O:1b (strain IP 31758) protein is Carboxy-S-adenosyl-L-methionine synthase.